A 359-amino-acid chain; its full sequence is UPF0283 membrane protein R01807 (359 aa).

2 consecutive transmembrane segments (helical) span residues 76–96 and 109–129; these read FGKIAAGAFGILISLAVGLWI and WLGYGAVAVVAIGVIAFLIVV.

This sequence belongs to the UPF0283 family.

The protein localises to the cell inner membrane. The chain is UPF0283 membrane protein R01807 from Rhizobium meliloti (strain 1021) (Ensifer meliloti).